Here is a 128-residue protein sequence, read N- to C-terminus: Small ribosomal subunit protein eS6 (128 aa).

The protein belongs to the eukaryotic ribosomal protein eS6 family.

This Methanobrevibacter smithii (strain ATCC 35061 / DSM 861 / OCM 144 / PS) protein is Small ribosomal subunit protein eS6.